An 81-amino-acid chain; its full sequence is Sulfur carrier protein TusA (81 aa).

Catalysis depends on cysteine 19, which acts as the Cysteine persulfide intermediate.

This sequence belongs to the sulfur carrier protein TusA family. As to quaternary structure, interacts with IscS.

It is found in the cytoplasm. The protein operates within tRNA modification. Sulfur carrier protein involved in sulfur trafficking in the cell. Part of a sulfur-relay system required for 2-thiolation during synthesis of 2-thiouridine of the modified wobble base 5-methylaminomethyl-2-thiouridine (mnm(5)s(2)U) in tRNA. Interacts with IscS and stimulates its cysteine desulfurase activity. Accepts an activated sulfur from IscS, which is then transferred to TusD, and thus determines the direction of sulfur flow from IscS to 2-thiouridine formation. Also appears to be involved in sulfur transfer for the biosynthesis of molybdopterin. The sequence is that of Sulfur carrier protein TusA from Pectobacterium atrosepticum (strain SCRI 1043 / ATCC BAA-672) (Erwinia carotovora subsp. atroseptica).